A 78-amino-acid chain; its full sequence is Large ribosomal subunit protein bL28 (78 aa).

The protein belongs to the bacterial ribosomal protein bL28 family.

The chain is Large ribosomal subunit protein bL28 from Salmonella choleraesuis (strain SC-B67).